The sequence spans 425 residues: tRNA(Met) cytidine acetate ligase (425 aa).

ATP-binding positions include 7–20 (VVEY…HLHH), Gly102, Asn162, and 187–188 (RI).

The protein belongs to the TmcAL family.

The protein resides in the cytoplasm. The enzyme catalyses cytidine(34) in elongator tRNA(Met) + acetate + ATP = N(4)-acetylcytidine(34) in elongator tRNA(Met) + AMP + diphosphate. Its function is as follows. Catalyzes the formation of N(4)-acetylcytidine (ac(4)C) at the wobble position of elongator tRNA(Met), using acetate and ATP as substrates. First activates an acetate ion to form acetyladenylate (Ac-AMP) and then transfers the acetyl group to tRNA to form ac(4)C34. The chain is tRNA(Met) cytidine acetate ligase from Fervidobacterium nodosum (strain ATCC 35602 / DSM 5306 / Rt17-B1).